The primary structure comprises 490 residues: Hydroxysteroid dehydrogenase-like protein 2 (490 aa).

NADP(+) is bound by residues G17–G23, K42, and D74. At K42 the chain carries N6-(2-hydroxyisobutyryl)lysine. K116 is subject to N6-acetyllysine. Catalysis depends on Y168, which acts as the Proton acceptor. K172 lines the NADP(+) pocket. Over residues M282–L301 the composition is skewed to basic and acidic residues. The interval M282–Q370 is disordered. The segment covering Q302–P367 has biased composition (low complexity). The region spanning G380–N487 is the SCP2 domain. An N6-succinyllysine modification is found at K390.

The protein belongs to the short-chain dehydrogenases/reductases (SDR) family. Widely expressed.

It is found in the peroxisome. The protein localises to the mitochondrion. Its function is as follows. Has apparently no steroid dehydrogenase activity. Controls bile acid (BA) and lipid metabolism in response to nutritional cues. This is Hydroxysteroid dehydrogenase-like protein 2 (Hsdl2) from Mus musculus (Mouse).